The following is a 143-amino-acid chain: Flagellar assembly factor FliW (143 aa).

Belongs to the FliW family. As to quaternary structure, interacts with translational regulator CsrA and flagellin(s).

The protein resides in the cytoplasm. Its function is as follows. Acts as an anti-CsrA protein, binds CsrA and prevents it from repressing translation of its target genes, one of which is flagellin. Binds to flagellin and participates in the assembly of the flagellum. This chain is Flagellar assembly factor FliW, found in Clostridium botulinum (strain ATCC 19397 / Type A).